Consider the following 154-residue polypeptide: Methylglyoxal synthase (154 aa).

One can recognise an MGS-like domain in the interval 6–154; the sequence is QSLPAKKNIA…KYLATRQIDI (149 aa). Substrate is bound by residues His-19, Lys-23, 45-48, and 65-66; these read TGTT and SG. The active-site Proton donor/acceptor is Asp-71. Substrate is bound at residue His-98.

Belongs to the methylglyoxal synthase family.

The enzyme catalyses dihydroxyacetone phosphate = methylglyoxal + phosphate. Catalyzes the formation of methylglyoxal from dihydroxyacetone phosphate. The sequence is that of Methylglyoxal synthase from Pseudoalteromonas translucida (strain TAC 125).